The chain runs to 312 residues: DNA-directed RNA polymerase subunit alpha (312 aa).

Residues 1 to 226 form an alpha N-terminal domain (alpha-NTD) region; sequence MIEFEKPNIT…EHLNLFTNLT (226 aa). Residues 243 to 312 form an alpha C-terminal domain (alpha-CTD) region; the sequence is DDRILERTIE…DLGLGLKNDK (70 aa).

Belongs to the RNA polymerase alpha chain family. In terms of assembly, homodimer. The RNAP catalytic core consists of 2 alpha, 1 beta, 1 beta' and 1 omega subunit. When a sigma factor is associated with the core the holoenzyme is formed, which can initiate transcription.

It catalyses the reaction RNA(n) + a ribonucleoside 5'-triphosphate = RNA(n+1) + diphosphate. Functionally, DNA-dependent RNA polymerase catalyzes the transcription of DNA into RNA using the four ribonucleoside triphosphates as substrates. This chain is DNA-directed RNA polymerase subunit alpha, found in Streptococcus sanguinis (strain SK36).